The following is an 844-amino-acid chain: Cell division cycle 5-like protein (844 aa).

HTH myb-type domains are found at residues 2–57 (RIMI…DPSI) and 58–107 (KKTE…DAAC). 2 consecutive DNA-binding regions (H-T-H motif) follow at residues 30–53 (WARI…YEWL) and 81–103 (WRTI…EKLL). The segment covering 113-126 (YDAADDPRKLRPGE) has biased composition (basic and acidic residues). Residues 113–147 (YDAADDPRKLRPGEIDPNPEAKPARPDPVDMDEDE) form a disordered region. Residues 145 to 189 (EDEKEMLSEARARLANTRGKKAKRKAREKQLEEARRLASLQKRRE) adopt a coiled-coil conformation. Thr-343 carries the post-translational modification Phosphothreonine. The interval 379-514 (QTPLLGGENP…PEEKIEEDMS (136 aa)) is disordered. Polar residues-rich tracts occupy residues 406–416 (QTPNPMLTPSM) and 433–442 (RDGSSFSMTP). Over residues 446–475 (PFRDELHINEDMDMHESAKLERQRREEARR) the composition is skewed to basic and acidic residues. Residues 500-513 (EESEEPEEKIEEDM) are compositionally biased toward acidic residues. A coiled-coil region spans residues 685 to 723 (GNADKVAAFQEEMENVRKKMEEDEKKAEHMKAKYKTYTK).

It belongs to the CEF1 family. In terms of assembly, component of the multiprotein assembly MOS4-associated complex (MAC) at least composed of MOS4, CDC5, PRL1 and PRP19. Interacts with PRL1, MOS4 and PRP19A. Associated with the spliceosome. In terms of tissue distribution, expressed extensively in shoot and root meristems.

It localises to the nucleus. Functionally, component of the MAC complex that probably regulates defense responses through transcriptional control and thereby is essential for plant innate immunity. Possesses a sequence specific DNA sequence 'CTCAGCG' binding activity. Involved in mRNA splicing and cell cycle control. May also play a role in the response to DNA damage. In Arabidopsis thaliana (Mouse-ear cress), this protein is Cell division cycle 5-like protein (CDC5).